The sequence spans 175 residues: tRNA (cytidine(56)-2'-O)-methyltransferase (175 aa).

Leu83 lines the S-adenosyl-L-methionine pocket.

This sequence belongs to the aTrm56 family. In terms of assembly, homodimer.

The protein localises to the cytoplasm. It catalyses the reaction cytidine(56) in tRNA + S-adenosyl-L-methionine = 2'-O-methylcytidine(56) in tRNA + S-adenosyl-L-homocysteine + H(+). Its function is as follows. Specifically catalyzes the AdoMet-dependent 2'-O-ribose methylation of cytidine at position 56 in tRNAs. This is tRNA (cytidine(56)-2'-O)-methyltransferase from Methanosphaera stadtmanae (strain ATCC 43021 / DSM 3091 / JCM 11832 / MCB-3).